A 120-amino-acid polypeptide reads, in one-letter code: MERHQHLLSEYQQILTLSEQMLMLATVENWNTLVDLEMTYLKAVENTANITISSCTSPVLQELLRQKLRSILENEIEIKRLLQRRLDKLSELVGQSTRQQAVNRTYGQFPDQALLLGETQ.

The segment at 1 to 50 is required for homodimerization; it reads MERHQHLLSEYQQILTLSEQMLMLATVENWNTLVDLEMTYLKAVENTANI. The fliD binding stretch occupies residues 60–98; that stretch reads LQELLRQKLRSILENEIEIKRLLQRRLDKLSELVGQSTR.

The protein belongs to the FliT family. In terms of assembly, homodimer. Interacts with FliD and FlhC.

The protein resides in the cytoplasm. It localises to the cytosol. Functionally, dual-function protein that regulates the transcription of class 2 flagellar operons and that also acts as an export chaperone for the filament-capping protein FliD. As a transcriptional regulator, acts as an anti-FlhDC factor; it directly binds FlhC, thus inhibiting the binding of the FlhC/FlhD complex to class 2 promoters, resulting in decreased expression of class 2 flagellar operons. As a chaperone, effects FliD transition to the membrane by preventing its premature polymerization, and by directing it to the export apparatus. The sequence is that of Flagellar protein FliT from Yersinia pestis (strain Pestoides F).